Reading from the N-terminus, the 432-residue chain is Adenylosuccinate synthetase (432 aa).

Residues 12 to 18 and 40 to 42 each bind GTP; these read GDEGKGK and GHT. The active-site Proton acceptor is D13. Mg(2+) is bound by residues D13 and G40. Residues 13 to 16, 38 to 41, T130, R144, Q225, T240, and R304 each bind IMP; these read DEGK and NAGH. Residue H41 is the Proton donor of the active site. 300–306 contributes to the substrate binding site; it reads ATTGRPR. GTP contacts are provided by residues R306, 332 to 334, and 414 to 416; these read KLD and SVG.

The protein belongs to the adenylosuccinate synthetase family. Homodimer. The cofactor is Mg(2+).

It is found in the cytoplasm. The enzyme catalyses IMP + L-aspartate + GTP = N(6)-(1,2-dicarboxyethyl)-AMP + GDP + phosphate + 2 H(+). The protein operates within purine metabolism; AMP biosynthesis via de novo pathway; AMP from IMP: step 1/2. In terms of biological role, plays an important role in the de novo pathway of purine nucleotide biosynthesis. Catalyzes the first committed step in the biosynthesis of AMP from IMP. The chain is Adenylosuccinate synthetase from Anaeromyxobacter dehalogenans (strain 2CP-1 / ATCC BAA-258).